We begin with the raw amino-acid sequence, 104 residues long: Small ribosomal subunit protein uS10 (104 aa).

This sequence belongs to the universal ribosomal protein uS10 family. Part of the 30S ribosomal subunit.

Its function is as follows. Involved in the binding of tRNA to the ribosomes. This is Small ribosomal subunit protein uS10 from Albidiferax ferrireducens (strain ATCC BAA-621 / DSM 15236 / T118) (Rhodoferax ferrireducens).